The sequence spans 501 residues: MNKHFAKLSQWTGEKFGFDRQKTTLSDDFCSLKGETDAWLVGMDKIHRSCTRWVRNMDKRKGLLDEKDKQLPVTHVGSSFVELGQALSHSSSNSHTYIMYGKSMVEIGHLQEEFMDYLNNSFLANLENSLAEFKALDVKEKKMENRRLVFDALSTKIQKAKKEESKLEEDLRNARAKYEESLEEFEDRMVQLKELEPDRVENVVRLLQMQIRFHQKSLDLLKGLEMNGFSKKRDNVNIPKRTYSARSIPSNISSTNVATTPSNTIFEMDDTLKADSSSNEYHSPTNTLPSYHTEADLDNSSIASSNRTQHTEDNYNKDVSDAQNSLGQSAVDLTTPSSPPIPRHTKPKLSTTQSTPVKPASLQSEEDIQLSFKQPELSASSAELDEKLKSQCNVSPSPSNISDAPPSKLNRSYSSPLASISSRKVVRMKYSFEPETENELKLKKGDLLLVLKEIDEGWWVGEKLGEDGVFTGNTGMFPSNYCVPAHPWDKTFRAFLKKGFK.

The BAR domain maps to 14-237; it reads EKFGFDRQKT…GFSKKRDNVN (224 aa). Threonine 285 carries the post-translational modification Phosphothreonine. Disordered regions lie at residues 302 to 321 and 329 to 414; these read IASS…DVSD and SAVD…RSYS. The segment covering 309 to 320 has biased composition (basic and acidic residues); sequence QHTEDNYNKDVS. Over residues 390-402 the composition is skewed to polar residues; sequence SQCNVSPSPSNIS. Phosphoserine is present on serine 414. In terms of domain architecture, SH3 spans 421 to 487; sequence SSRKVVRMKY…PSNYCVPAHP (67 aa).

It localises to the cytoplasm. This is an uncharacterized protein from Schizosaccharomyces pombe (strain 972 / ATCC 24843) (Fission yeast).